The chain runs to 578 residues: Hemolysin 4 (578 aa).

The interval 289–322 (KDGPKASWRRRPSSASSVTMPTTPRIIGSNARPE) is disordered. Positions 448-539 (RPVNLQLGGF…LSNLSAHQLL (92 aa)) constitute a Ricin B-type lectin domain.

The protein belongs to the HlyA hemolysin family.

Bacterial hemolysins are exotoxins that attack blood cell membranes and cause cell rupture by mechanisms not clearly defined. This is Hemolysin 4 (ash4) from Aeromonas salmonicida.